An 88-amino-acid polypeptide reads, in one-letter code: Small ribosomal subunit protein uS17 (88 aa).

Belongs to the universal ribosomal protein uS17 family. Part of the 30S ribosomal subunit.

Functionally, one of the primary rRNA binding proteins, it binds specifically to the 5'-end of 16S ribosomal RNA. The polypeptide is Small ribosomal subunit protein uS17 (Helicobacter hepaticus (strain ATCC 51449 / 3B1)).